The following is a 305-amino-acid chain: MRPLAIIGPTGTGKSALALDVAERLGGEIGVEIVNADAMQLYRGMDIGTAKLPAAQRRGVPHHQLDVLDVTETASVARYQSEAARDIEAIAARGAVPIIVGGSMMYVQALLDDWAFPATDPAVRARWEQRLAEVGVAALHGELGKVDPDAAASILPTDGRRIVRALEVVELTGQPFAASAPTIGAPRWDTAIIGLDWETTVLDERLAARTDSMFAEGLVAEVAGLLRHGLREGVTASRALGYAQVLADLDAGGDGSAAREPTFVGTRRYVRRQRSWFRRDHRVCWLDGGSPDNVDRTLRAWRAVS.

An ATP-binding site is contributed by 8–15 (GPTGTGKS). Substrate is bound at residue 10-15 (TGTGKS).

It belongs to the IPP transferase family. As to quaternary structure, monomer. It depends on Mg(2+) as a cofactor.

The catalysed reaction is adenosine(37) in tRNA + dimethylallyl diphosphate = N(6)-dimethylallyladenosine(37) in tRNA + diphosphate. In terms of biological role, catalyzes the transfer of a dimethylallyl group onto the adenine at position 37 in tRNAs that read codons beginning with uridine, leading to the formation of N6-(dimethylallyl)adenosine (i(6)A). The protein is tRNA dimethylallyltransferase of Mycobacterium sp. (strain KMS).